The chain runs to 313 residues: Ribosomal RNA small subunit methyltransferase H (313 aa).

S-adenosyl-L-methionine is bound by residues 48–50 (GGH), Asp-68, Phe-102, Asp-120, and Gln-127. The tract at residues 290–313 (TATEEEIDRNPRSRSAKLRAAARK) is disordered. Positions 301–313 (RSRSAKLRAAARK) are enriched in basic residues.

The protein belongs to the methyltransferase superfamily. RsmH family.

It localises to the cytoplasm. It catalyses the reaction cytidine(1402) in 16S rRNA + S-adenosyl-L-methionine = N(4)-methylcytidine(1402) in 16S rRNA + S-adenosyl-L-homocysteine + H(+). Its function is as follows. Specifically methylates the N4 position of cytidine in position 1402 (C1402) of 16S rRNA. The sequence is that of Ribosomal RNA small subunit methyltransferase H from Koribacter versatilis (strain Ellin345).